Here is a 135-residue protein sequence, read N- to C-terminus: Small ribosomal subunit protein uS9 (135 aa).

Positions 107-118 are enriched in basic and acidic residues; that stretch reads LVGDPRRTEPHK. The interval 107–135 is disordered; that stretch reads LVGDPRRTEPHKPNRSTKGPRAKRQKSYR. The span at 119-135 shows a compositional bias: basic residues; it reads PNRSTKGPRAKRQKSYR.

The protein belongs to the universal ribosomal protein uS9 family. In terms of assembly, part of the 30S ribosomal subunit.

The sequence is that of Small ribosomal subunit protein uS9 from Pyrococcus furiosus (strain ATCC 43587 / DSM 3638 / JCM 8422 / Vc1).